Here is a 335-residue protein sequence, read N- to C-terminus: Transcription factor bHLH63 (335 aa).

Residues 110-160 (MTMNRDDLVEEGEEEKSKITEQNNGSTKSIKKMKHKAKKEENNFSNDSSKV) form a disordered region. Residues 178–228 (QATDSHSIAERVRREKISERMKFLQDLVPGCDKITGKAGMLDEIINYVQSL) form the bHLH domain.

In terms of assembly, homodimer. Interacts with IBH1. Binds reversibly to CRY2 after blue light illumination. Expressed constitutively in roots, leaves, and stems.

The protein resides in the nucleus. Functionally, transcription factor that binds DNA to G box 5'-CACGTG-3' and, to a lower extent, to E-box 5'-CANNTG-3' in vitro. Binds to chromatin DNA of the FT gene and promotes its expression, and thus triggers flowering in response to blue light. The sequence is that of Transcription factor bHLH63 (BHLH63) from Arabidopsis thaliana (Mouse-ear cress).